Consider the following 507-residue polypeptide: Maturase K (507 aa).

Belongs to the intron maturase 2 family. MatK subfamily.

Its subcellular location is the plastid. It is found in the chloroplast. Functionally, usually encoded in the trnK tRNA gene intron. Probably assists in splicing its own and other chloroplast group II introns. In Lens culinaris (Lentil), this protein is Maturase K.